The following is a 188-amino-acid chain: Kininogen (188 aa).

3 N-linked (GlcNAc...) asparagine glycosylation sites follow: asparagine 36, asparagine 150, and asparagine 182.

Post-translationally, bradykinin is released from kininogen by kallikrein. In terms of processing, N-glycosylated. Contains O-acetylated sialic acids as terminal elements on biantennary and triantennary N-glycans.

Its function is as follows. Inhibits papain and ficin (cysteine proteinases) but not trypsin (a serine proteinase). The sequence is that of Kininogen from Anarhichas minor (Arctic spotted wolffish).